The chain runs to 101 residues: UPF0213 protein VC_A0739 (101 aa).

In terms of domain architecture, GIY-YIG spans 9-85; that stretch reads SPWFVYLVRC…KALSKSQKEA (77 aa).

The protein belongs to the UPF0213 family.

In Vibrio cholerae serotype O1 (strain ATCC 39315 / El Tor Inaba N16961), this protein is UPF0213 protein VC_A0739.